A 348-amino-acid chain; its full sequence is Anthranilate phosphoribosyltransferase (348 aa).

5-phospho-alpha-D-ribose 1-diphosphate is bound by residues Gly-91, 94–95, Thr-99, 101–104, 119–127, and Ser-131; these read GD, NIST, and KHGNRSASG. Position 91 (Gly-91) interacts with anthranilate. Ser-103 contacts Mg(2+). Residue Asn-122 participates in anthranilate binding. Position 177 (Arg-177) interacts with anthranilate. 2 residues coordinate Mg(2+): Asp-236 and Glu-237.

It belongs to the anthranilate phosphoribosyltransferase family. As to quaternary structure, homodimer. Mg(2+) serves as cofactor.

The enzyme catalyses N-(5-phospho-beta-D-ribosyl)anthranilate + diphosphate = 5-phospho-alpha-D-ribose 1-diphosphate + anthranilate. Its pathway is amino-acid biosynthesis; L-tryptophan biosynthesis; L-tryptophan from chorismate: step 2/5. Its function is as follows. Catalyzes the transfer of the phosphoribosyl group of 5-phosphorylribose-1-pyrophosphate (PRPP) to anthranilate to yield N-(5'-phosphoribosyl)-anthranilate (PRA). The protein is Anthranilate phosphoribosyltransferase of Synechococcus sp. (strain ATCC 27144 / PCC 6301 / SAUG 1402/1) (Anacystis nidulans).